Reading from the N-terminus, the 257-residue chain is Adenosylcobinamide-GDP ribazoletransferase (257 aa).

7 helical membrane passes run 30 to 50 (IVYFPLVGFVIGILSYLIGWI), 52 to 72 (MLLFEPFIASIIITLAGVLIT), 109 to 129 (SLLAIMFVLLLKVGFVYDIIS), 132 to 152 (SLWVIIFMPMIARLGVMLLTY), 175 to 195 (LITAIIYTLLIVALITKFIFL), 198 to 218 (NIVLIKVLGSIIVVFVFIILF), and 237 to 257 (GIELSELVYLIYIYLLIFMFF).

Belongs to the CobS family. Mg(2+) is required as a cofactor.

Its subcellular location is the cell membrane. It catalyses the reaction alpha-ribazole + adenosylcob(III)inamide-GDP = adenosylcob(III)alamin + GMP + H(+). It carries out the reaction alpha-ribazole 5'-phosphate + adenosylcob(III)inamide-GDP = adenosylcob(III)alamin 5'-phosphate + GMP + H(+). It participates in cofactor biosynthesis; adenosylcobalamin biosynthesis; adenosylcobalamin from cob(II)yrinate a,c-diamide: step 7/7. Functionally, joins adenosylcobinamide-GDP and alpha-ribazole to generate adenosylcobalamin (Ado-cobalamin). Also synthesizes adenosylcobalamin 5'-phosphate from adenosylcobinamide-GDP and alpha-ribazole 5'-phosphate. This chain is Adenosylcobinamide-GDP ribazoletransferase, found in Clostridioides difficile (strain 630) (Peptoclostridium difficile).